The sequence spans 346 residues: N-acetyl-gamma-glutamyl-phosphate reductase (346 aa).

The active site involves Cys-149.

The protein belongs to the NAGSA dehydrogenase family. Type 1 subfamily.

Its subcellular location is the cytoplasm. The catalysed reaction is N-acetyl-L-glutamate 5-semialdehyde + phosphate + NADP(+) = N-acetyl-L-glutamyl 5-phosphate + NADPH + H(+). It functions in the pathway amino-acid biosynthesis; L-arginine biosynthesis; N(2)-acetyl-L-ornithine from L-glutamate: step 3/4. In terms of biological role, catalyzes the NADPH-dependent reduction of N-acetyl-5-glutamyl phosphate to yield N-acetyl-L-glutamate 5-semialdehyde. In Desulfotalea psychrophila (strain LSv54 / DSM 12343), this protein is N-acetyl-gamma-glutamyl-phosphate reductase.